The following is a 377-amino-acid chain: cAMP-dependent protein kinase type II regulatory subunit (377 aa).

A compositionally biased stretch (polar residues) spans 48–69 (ERPSVSHTDQSTDDQLSVNSQD). The interval 48–78 (ERPSVSHTDQSTDDQLSVNSQDADAEPPVMA) is disordered. A phosphoserine mark is found at Ser51, Ser58, Ser64, Ser67, and Ser84. The Pseudophosphorylation motif signature appears at 81–85 (RRKSV). Phosphotyrosine is present on Tyr90. Residues 124-239 (LFRS…LLNS), Glu189, Arg198, 242-362 (MLKA…YESQ), Glu311, and Arg320 each bind 3',5'-cyclic AMP.

Belongs to the cAMP-dependent kinase regulatory chain family. Tetramer, composed of 2 regulatory (R) and 2 catalytic (C) subunits. In the presence of cAMP it dissociates into 2 active monomeric C subunits and an R dimer. Interacts with Akap200. The pseudophosphorylation site binds to the substrate-binding region of the catalytic chain but is not phosphorylated. The physiological significance of phosphorylations by other kinases is unclear. Detected in follicle cells, germline-derived cells, germline line stem cells and outer rim of ring canals of nurse cells throughout oogenesis (at protein level).

Its subcellular location is the cytoplasm. It localises to the cell membrane. Functionally, regulatory subunit of the cAMP-dependent protein kinases involved in cAMP signaling in cells. Mediates membrane association by binding to anchoring proteins, such as Akap200. Might play an essential role in the regulation of neuronal activity in the brain. The protein is cAMP-dependent protein kinase type II regulatory subunit (Pka-R2) of Drosophila melanogaster (Fruit fly).